Consider the following 880-residue polypeptide: Pyruvate, phosphate dikinase (880 aa).

An N-terminal region spans residues 1–348 (MNKLIYYFGN…LYILQTRTAK (348 aa)). Residue Arg97 coordinates ATP. A linker 1 region spans residues 349 to 405 (RTAIAAINIAVQMVEEKLISKEQALMRIDPESLNQLLHTRIDYSKKLTAIAEGLPAS). Positions 406–503 (PGAATGIVVF…VIKQGDIITI (98 aa)) are central. Thr458 bears the Phosphothreonine; by PDRP1 mark. The active-site Tele-phosphohistidine intermediate is the His460. The tract at residues 504–538 (DGGSGKIFLGEMPLIQPTFSEESTLILDWADEISS) is linker 2. Positions 539-879 (LKVRANAETV…AAAQAKIKQG (341 aa)) are C-terminal. Arg566, Arg622, Glu750, Gly771, Thr772, Asn773, and Asp774 together coordinate substrate. Position 750 (Glu750) interacts with Mg(2+). Asp774 contacts Mg(2+). Residue Cys836 is the Proton donor of the active site.

It belongs to the PEP-utilizing enzyme family. Homodimer. The cofactor is Mg(2+). In terms of processing, phosphorylation of Thr-458 in the dark inactivates the enzyme. Dephosphorylation upon light stimulation reactivates the enzyme.

The catalysed reaction is pyruvate + phosphate + ATP = phosphoenolpyruvate + AMP + diphosphate + H(+). Activated by light-induced dephosphorylation. Inhibited by dark-induced phosphorylation. Both reactions are catalyzed by PDRP1. Catalyzes the reversible phosphorylation of pyruvate and phosphate. The protein is Pyruvate, phosphate dikinase (ppdK) of Rickettsia typhi (strain ATCC VR-144 / Wilmington).